The following is a 452-amino-acid chain: Phosphoglucosamine mutase (452 aa).

Residue S104 is the Phosphoserine intermediate of the active site. Positions 104, 244, 246, and 248 each coordinate Mg(2+). Phosphoserine is present on S104.

The protein belongs to the phosphohexose mutase family. Mg(2+) is required as a cofactor. Activated by phosphorylation.

It carries out the reaction alpha-D-glucosamine 1-phosphate = D-glucosamine 6-phosphate. Functionally, catalyzes the conversion of glucosamine-6-phosphate to glucosamine-1-phosphate. This is Phosphoglucosamine mutase from Pediococcus pentosaceus (strain ATCC 25745 / CCUG 21536 / LMG 10740 / 183-1w).